We begin with the raw amino-acid sequence, 285 residues long: Bifunctional protein FolD (285 aa).

NADP(+)-binding positions include 165 to 167 and serine 190; that span reads GRS.

This sequence belongs to the tetrahydrofolate dehydrogenase/cyclohydrolase family. Homodimer.

The catalysed reaction is (6R)-5,10-methylene-5,6,7,8-tetrahydrofolate + NADP(+) = (6R)-5,10-methenyltetrahydrofolate + NADPH. The enzyme catalyses (6R)-5,10-methenyltetrahydrofolate + H2O = (6R)-10-formyltetrahydrofolate + H(+). It functions in the pathway one-carbon metabolism; tetrahydrofolate interconversion. Functionally, catalyzes the oxidation of 5,10-methylenetetrahydrofolate to 5,10-methenyltetrahydrofolate and then the hydrolysis of 5,10-methenyltetrahydrofolate to 10-formyltetrahydrofolate. The chain is Bifunctional protein FolD from Burkholderia pseudomallei (strain 1106a).